A 1234-amino-acid polypeptide reads, in one-letter code: DNA-directed RNA polymerase subunit beta (1234 aa).

Residues 1169-1234 are disordered; that stretch reads ESVDEDADEL…LDLDDFGDEH (66 aa). Acidic residues-rich tracts occupy residues 1171–1180 and 1191–1234; these read VDEDADELEV and EKEE…GDEH.

Belongs to the RNA polymerase beta chain family. In terms of assembly, the RNAP catalytic core consists of 2 alpha, 1 beta, 1 beta' and 1 omega subunit. When a sigma factor is associated with the core the holoenzyme is formed, which can initiate transcription.

The catalysed reaction is RNA(n) + a ribonucleoside 5'-triphosphate = RNA(n+1) + diphosphate. DNA-dependent RNA polymerase catalyzes the transcription of DNA into RNA using the four ribonucleoside triphosphates as substrates. This chain is DNA-directed RNA polymerase subunit beta, found in Clostridium botulinum (strain Langeland / NCTC 10281 / Type F).